The primary structure comprises 586 residues: Methionine--tRNA ligase, mitochondrial (586 aa).

The N-terminal 46 residues, 1–46, are a transit peptide targeting the mitochondrion; the sequence is MLRQCARWVLTRTRFGRGCRRYGSCSPSASGDAGEARAYFTTPIFY. The short motif at 45-55 is the 'HIGH' region element; that stretch reads FYVNAAPHIGH. Positions 340 to 344 match the 'KMSKS' region motif; that stretch reads KMSKS. An ATP-binding site is contributed by lysine 343.

The protein belongs to the class-I aminoacyl-tRNA synthetase family.

It is found in the mitochondrion matrix. It carries out the reaction tRNA(Met) + L-methionine + ATP = L-methionyl-tRNA(Met) + AMP + diphosphate. The sequence is that of Methionine--tRNA ligase, mitochondrial (Mars2) from Mus musculus (Mouse).